The following is a 440-amino-acid chain: uncharacterized protein (440 aa).

A run of 10 helical transmembrane segments spans residues 26 to 46 (NGLI…SSTF), 59 to 79 (FVFW…NGVL), 96 to 116 (FFLG…LKLK), 138 to 158 (LTLS…SIYL), 211 to 231 (FLVF…YLFA), 241 to 261 (LRKP…VGII), 263 to 283 (WIII…FVIF), 284 to 304 (WVIK…SLTI), 394 to 414 (FLII…SVFI), and 418 to 438 (IVQI…FTFI).

To M.pneumoniae MPN_087.

The protein resides in the cell membrane. This is an uncharacterized protein from Mycoplasma pneumoniae (strain ATCC 29342 / M129 / Subtype 1) (Mycoplasmoides pneumoniae).